The sequence spans 311 residues: Ribosomal RNA small subunit methyltransferase H (311 aa).

S-adenosyl-L-methionine contacts are provided by residues 41–43 (GGH), Asp61, Phe85, Asp102, and Gln109.

It belongs to the methyltransferase superfamily. RsmH family.

The protein resides in the cytoplasm. The catalysed reaction is cytidine(1402) in 16S rRNA + S-adenosyl-L-methionine = N(4)-methylcytidine(1402) in 16S rRNA + S-adenosyl-L-homocysteine + H(+). Specifically methylates the N4 position of cytidine in position 1402 (C1402) of 16S rRNA. This is Ribosomal RNA small subunit methyltransferase H from Paracidovorax citrulli (strain AAC00-1) (Acidovorax citrulli).